The primary structure comprises 497 residues: Glycerol kinase (497 aa).

Residue Thr11 coordinates ADP. 3 residues coordinate ATP: Thr11, Ser12, and Ser13. Position 11 (Thr11) interacts with sn-glycerol 3-phosphate. Arg15 is an ADP binding site. Sn-glycerol 3-phosphate is bound by residues Arg81, Glu82, Tyr133, and Asp242. Glycerol is bound by residues Arg81, Glu82, Tyr133, Asp242, and Gln243. ADP-binding residues include Thr264 and Gly307. ATP contacts are provided by Thr264, Gly307, Gln311, and Gly412. ADP contacts are provided by Gly412 and Asn416.

It belongs to the FGGY kinase family.

It catalyses the reaction glycerol + ATP = sn-glycerol 3-phosphate + ADP + H(+). It functions in the pathway polyol metabolism; glycerol degradation via glycerol kinase pathway; sn-glycerol 3-phosphate from glycerol: step 1/1. Inhibited by fructose 1,6-bisphosphate (FBP). Functionally, key enzyme in the regulation of glycerol uptake and metabolism. Catalyzes the phosphorylation of glycerol to yield sn-glycerol 3-phosphate. The sequence is that of Glycerol kinase from Polaromonas naphthalenivorans (strain CJ2).